The following is a 279-amino-acid chain: Urease accessory protein UreD (279 aa).

Belongs to the UreD family. In terms of assembly, ureD, UreF and UreG form a complex that acts as a GTP-hydrolysis-dependent molecular chaperone, activating the urease apoprotein by helping to assemble the nickel containing metallocenter of UreC. The UreE protein probably delivers the nickel.

Its subcellular location is the cytoplasm. Its function is as follows. Required for maturation of urease via the functional incorporation of the urease nickel metallocenter. This chain is Urease accessory protein UreD, found in Nitrosospira multiformis (strain ATCC 25196 / NCIMB 11849 / C 71).